A 257-amino-acid chain; its full sequence is Nickel import system ATP-binding protein NikD (257 aa).

An ABC transporter domain is found at 4–245; that stretch reads IDIQNLTIKN…HLHPYTERLI (242 aa). 37–44 lines the ATP pocket; that stretch reads GESGAGKS.

The protein belongs to the ABC transporter superfamily. In terms of assembly, the complex is composed of two ATP-binding proteins (NikD and NikE), two transmembrane proteins (NikB and NikC) and a solute-binding protein (NikA).

The protein localises to the cell membrane. It carries out the reaction Ni(2+)(out) + ATP + H2O = Ni(2+)(in) + ADP + phosphate + H(+). Part of the ABC transporter complex NikABCDE (Opp2) involved in nickel import. Probably responsible for energy coupling to the transport system. The sequence is that of Nickel import system ATP-binding protein NikD from Staphylococcus aureus (strain Mu50 / ATCC 700699).